The following is a 262-amino-acid chain: Cytochrome c oxidase subunit 3 (262 aa).

6 consecutive transmembrane segments (helical) span residues 39-59, 83-103, 120-140, 163-183, 198-218, and 240-260; these read YDIS…YQWW, GMIL…WAFF, MGII…ILLA, GLFF…YEYI, FFMA…FLLV, and AWYW…IYWW.

The protein belongs to the cytochrome c oxidase subunit 3 family. In terms of assembly, component of the cytochrome c oxidase (complex IV, CIV), a multisubunit enzyme composed of a catalytic core of 3 subunits and several supernumerary subunits. The complex exists as a monomer or a dimer and forms supercomplexes (SCs) in the inner mitochondrial membrane with ubiquinol-cytochrome c oxidoreductase (cytochrome b-c1 complex, complex III, CIII).

It is found in the mitochondrion inner membrane. The enzyme catalyses 4 Fe(II)-[cytochrome c] + O2 + 8 H(+)(in) = 4 Fe(III)-[cytochrome c] + 2 H2O + 4 H(+)(out). Component of the cytochrome c oxidase, the last enzyme in the mitochondrial electron transport chain which drives oxidative phosphorylation. The respiratory chain contains 3 multisubunit complexes succinate dehydrogenase (complex II, CII), ubiquinol-cytochrome c oxidoreductase (cytochrome b-c1 complex, complex III, CIII) and cytochrome c oxidase (complex IV, CIV), that cooperate to transfer electrons derived from NADH and succinate to molecular oxygen, creating an electrochemical gradient over the inner membrane that drives transmembrane transport and the ATP synthase. Cytochrome c oxidase is the component of the respiratory chain that catalyzes the reduction of oxygen to water. Electrons originating from reduced cytochrome c in the intermembrane space (IMS) are transferred via the dinuclear copper A center (CU(A)) of subunit 2 and heme A of subunit 1 to the active site in subunit 1, a binuclear center (BNC) formed by heme A3 and copper B (CU(B)). The BNC reduces molecular oxygen to 2 water molecules using 4 electrons from cytochrome c in the IMS and 4 protons from the mitochondrial matrix. This is Cytochrome c oxidase subunit 3 (mt:CoIII) from Drosophila melanogaster (Fruit fly).